A 753-amino-acid chain; its full sequence is 5-methyltetrahydropteroyltriglutamate--homocysteine methyltransferase (753 aa).

Residues 17–20 (RELK) and lysine 117 each bind 5-methyltetrahydropteroyltri-L-glutamate. Residues 431-433 (IGS) and glutamate 484 contribute to the L-homocysteine site. L-methionine contacts are provided by residues 431–433 (IGS) and glutamate 484. Residues 515 to 516 (RC) and tryptophan 561 contribute to the 5-methyltetrahydropteroyltri-L-glutamate site. L-homocysteine is bound at residue aspartate 599. Aspartate 599 serves as a coordination point for L-methionine. Residue glutamate 605 participates in 5-methyltetrahydropteroyltri-L-glutamate binding. Residues histidine 641, cysteine 643, and glutamate 665 each coordinate Zn(2+). Histidine 694 functions as the Proton donor in the catalytic mechanism. Cysteine 726 provides a ligand contact to Zn(2+).

The protein belongs to the vitamin-B12 independent methionine synthase family. Requires Zn(2+) as cofactor.

The enzyme catalyses 5-methyltetrahydropteroyltri-L-glutamate + L-homocysteine = tetrahydropteroyltri-L-glutamate + L-methionine. Its pathway is amino-acid biosynthesis; L-methionine biosynthesis via de novo pathway; L-methionine from L-homocysteine (MetE route): step 1/1. In terms of biological role, catalyzes the transfer of a methyl group from 5-methyltetrahydrofolate to homocysteine resulting in methionine formation. The chain is 5-methyltetrahydropteroyltriglutamate--homocysteine methyltransferase from Shigella flexneri.